Reading from the N-terminus, the 272-residue chain is Shikimate dehydrogenase (NADP(+)) (272 aa).

Residues 14–16 and T61 contribute to the shikimate site; that span reads SKS. K65 functions as the Proton acceptor in the catalytic mechanism. E77 is an NADP(+) binding site. Positions 86 and 102 each coordinate shikimate. Residues 126 to 130, 149 to 154, and M213 each bind NADP(+); these read GAGGA and NRTASR. Y215 contacts shikimate. Residue G237 coordinates NADP(+).

It belongs to the shikimate dehydrogenase family. In terms of assembly, homodimer.

The catalysed reaction is shikimate + NADP(+) = 3-dehydroshikimate + NADPH + H(+). It participates in metabolic intermediate biosynthesis; chorismate biosynthesis; chorismate from D-erythrose 4-phosphate and phosphoenolpyruvate: step 4/7. Involved in the biosynthesis of the chorismate, which leads to the biosynthesis of aromatic amino acids. Catalyzes the reversible NADPH linked reduction of 3-dehydroshikimate (DHSA) to yield shikimate (SA). The polypeptide is Shikimate dehydrogenase (NADP(+)) (Citrobacter koseri (strain ATCC BAA-895 / CDC 4225-83 / SGSC4696)).